Consider the following 285-residue polypeptide: Probable methyltransferase ltbC (285 aa).

The disordered stretch occupies residues 1–22; that stretch reads MASTGQTNNYKQGYSSQTVETQ.

The protein belongs to the class I-like SAM-binding methyltransferase superfamily. In terms of assembly, monomer.

In terms of biological role, probable methyltransferase; part of the gene cluster that mediates the biosynthesis of luteodienoside A, a glycosylated polyketide consisting of an unusual 1-O-beta-D-glucopyranosyl-myo-inositol (glucinol) ester of 3-hydroxy-2,2,4-trimethylocta-4,6-dienoic acid. The HR-PKS ltbA produces the trimethylated polyketide chain from acetyl-CoA, malonyl-CoA and S-adenosylmethionine (SAM), and the ltbA cAT domain then uses glucinol produced by the glycosyltransferase ltbB as an offloading substrate to release luteodienoside A. Since ltbA and ltbB are sufficient for the biosynthesis of luteodienoside A, the functions of the methyltransferase ltbC and the FAD-binding monooxygenase ltbD within the pathway remain obscur. This is Probable methyltransferase ltbC from Aspergillus luteorubrus.